Reading from the N-terminus, the 75-residue chain is Small ribosomal subunit protein bS18 (75 aa).

It belongs to the bacterial ribosomal protein bS18 family. In terms of assembly, part of the 30S ribosomal subunit. Forms a tight heterodimer with protein bS6.

Binds as a heterodimer with protein bS6 to the central domain of the 16S rRNA, where it helps stabilize the platform of the 30S subunit. The polypeptide is Small ribosomal subunit protein bS18 (Dinoroseobacter shibae (strain DSM 16493 / NCIMB 14021 / DFL 12)).